Consider the following 222-residue polypeptide: uncharacterized protein (222 aa).

The next 4 membrane-spanning stretches (helical) occupy residues 23–43 (FFAAAMLPATLVIIFVETGLL), 67–87 (IWVLSPSVAVVAVLGDQIGYL), 157–177 (IVGGILWGGGVTVAGYFLGNV), and 187–207 (IILGILFVSLLPALIAAWHGY).

Belongs to the DedA family.

It localises to the cell membrane. This is an uncharacterized protein from Mycobacterium leprae (strain TN).